The primary structure comprises 704 residues: Eukaryotic translation initiation factor 2-alpha kinase 1 (704 aa).

Positions 224-667 (FEELELLGKG…LTSNLFHDLV (444 aa)) constitute a Protein kinase domain. ATP-binding positions include 230–238 (LGKGGYGSV) and lysine 253. The active-site Proton acceptor is the aspartate 491.

The protein belongs to the protein kinase superfamily. Ser/Thr protein kinase family. GCN2 subfamily. Autophosphorylated.

It catalyses the reaction L-seryl-[protein] + ATP = O-phospho-L-seryl-[protein] + ADP + H(+). It carries out the reaction L-threonyl-[protein] + ATP = O-phospho-L-threonyl-[protein] + ADP + H(+). Functionally, mediates down-regulation of protein synthesis in response to stress conditions by the phosphorylation of the alpha subunit of eIF-2 (tif211) on 'Ser-52'. Protein synthesis is inhibited at the level of initiation. Activity is inhibited in the presence of heme. The protein is Eukaryotic translation initiation factor 2-alpha kinase 1 (hri1) of Schizosaccharomyces pombe (strain 972 / ATCC 24843) (Fission yeast).